Reading from the N-terminus, the 257-residue chain is 1-(5-phosphoribosyl)-5-[(5-phosphoribosylamino)methylideneamino] imidazole-4-carboxamide isomerase (257 aa).

Asp8 functions as the Proton acceptor in the catalytic mechanism. Catalysis depends on Asp130, which acts as the Proton donor.

This sequence belongs to the HisA/HisF family.

It is found in the cytoplasm. It catalyses the reaction 1-(5-phospho-beta-D-ribosyl)-5-[(5-phospho-beta-D-ribosylamino)methylideneamino]imidazole-4-carboxamide = 5-[(5-phospho-1-deoxy-D-ribulos-1-ylimino)methylamino]-1-(5-phospho-beta-D-ribosyl)imidazole-4-carboxamide. The protein operates within amino-acid biosynthesis; L-histidine biosynthesis; L-histidine from 5-phospho-alpha-D-ribose 1-diphosphate: step 4/9. The sequence is that of 1-(5-phosphoribosyl)-5-[(5-phosphoribosylamino)methylideneamino] imidazole-4-carboxamide isomerase from Chlorobium chlorochromatii (strain CaD3).